A 348-amino-acid polypeptide reads, in one-letter code: Phenylalanine--tRNA ligase alpha subunit (348 aa).

Residue Glu259 participates in Mg(2+) binding.

It belongs to the class-II aminoacyl-tRNA synthetase family. Phe-tRNA synthetase alpha subunit type 1 subfamily. As to quaternary structure, tetramer of two alpha and two beta subunits. The cofactor is Mg(2+).

It localises to the cytoplasm. The catalysed reaction is tRNA(Phe) + L-phenylalanine + ATP = L-phenylalanyl-tRNA(Phe) + AMP + diphosphate + H(+). The polypeptide is Phenylalanine--tRNA ligase alpha subunit (Lacticaseibacillus casei (strain BL23) (Lactobacillus casei)).